Here is a 155-residue protein sequence, read N- to C-terminus: Large ribosomal subunit protein uL22 (155 aa).

This sequence belongs to the universal ribosomal protein uL22 family. Part of the 50S ribosomal subunit.

This protein binds specifically to 23S rRNA. It makes multiple contacts with different domains of the 23S rRNA in the assembled 50S subunit and ribosome. Its function is as follows. The globular domain of the protein is located near the polypeptide exit tunnel on the outside of the subunit, while an extended beta-hairpin is found that lines the wall of the exit tunnel in the center of the 70S ribosome. This chain is Large ribosomal subunit protein uL22, found in Pyrococcus horikoshii (strain ATCC 700860 / DSM 12428 / JCM 9974 / NBRC 100139 / OT-3).